Consider the following 335-residue polypeptide: Tetraacyldisaccharide 4'-kinase (335 aa).

58-65 contributes to the ATP binding site; sequence TVGGNGKT.

Belongs to the LpxK family.

It catalyses the reaction a lipid A disaccharide + ATP = a lipid IVA + ADP + H(+). The protein operates within glycolipid biosynthesis; lipid IV(A) biosynthesis; lipid IV(A) from (3R)-3-hydroxytetradecanoyl-[acyl-carrier-protein] and UDP-N-acetyl-alpha-D-glucosamine: step 6/6. Functionally, transfers the gamma-phosphate of ATP to the 4'-position of a tetraacyldisaccharide 1-phosphate intermediate (termed DS-1-P) to form tetraacyldisaccharide 1,4'-bis-phosphate (lipid IVA). The sequence is that of Tetraacyldisaccharide 4'-kinase from Dichelobacter nodosus (strain VCS1703A).